A 332-amino-acid chain; its full sequence is CAX-interacting protein 4 (332 aa).

Residues 33–59 form a disordered region; that stretch reads GYDPYAPTSKEEPKTTQQKTEDPENSY. The segment covering 41–54 has biased composition (basic and acidic residues); it reads SKEEPKTTQQKTED. Residues 81 to 98 form a CCHC-type zinc finger; it reads GSCKKCGRVGHLTFQCRN. A compositionally biased stretch (basic and acidic residues) spans 124–133; sequence IRRGVGKGEV. Residues 124–332 form a disordered region; sequence IRRGVGKGEV…RKRHHRKERE (209 aa). Residues 134–153 are compositionally biased toward acidic residues; the sequence is EEVSSEEEEESESSDSDVDS. Residues 154-163 show a composition bias toward basic and acidic residues; sequence EMERIIAERF. 2 stretches are compositionally biased toward basic residues: residues 198 to 214 and 227 to 236; these read RKRR…HKRR and SKRRKERRGR. Acidic residues predominate over residues 241–250; the sequence is DDSDESEDED. Basic residues-rich tracts occupy residues 254 to 269 and 314 to 332; these read VKRK…RSRR and SSKR…KERE.

As to quaternary structure, interacts with CAX1. In terms of tissue distribution, expressed in leaves, stems and roots, and at lower levels in flowers.

The protein localises to the nucleus. Its function is as follows. May regulate CAX1 cation transporter. The sequence is that of CAX-interacting protein 4 (CXIP4) from Arabidopsis thaliana (Mouse-ear cress).